The following is a 147-amino-acid chain: UPF0306 protein YhbP (147 aa).

Belongs to the UPF0306 family.

The sequence is that of UPF0306 protein YhbP from Escherichia coli O157:H7 (strain EC4115 / EHEC).